The primary structure comprises 698 residues: Polyribonucleotide nucleotidyltransferase (698 aa).

2 residues coordinate Mg(2+): Asp488 and Asp494. In terms of domain architecture, KH spans 555–614; sequence PRLLTIRIDPDKIRDVIGKGGATIRALTEETGTTIDISDDGKVTIASADKAAADEARRRI. The S1 motif domain occupies 624–692; that stretch reads GTVYEGKVSK…RQGRIRLSMK (69 aa).

Belongs to the polyribonucleotide nucleotidyltransferase family. As to quaternary structure, component of the RNA degradosome, which is a multiprotein complex involved in RNA processing and mRNA degradation. The cofactor is Mg(2+).

The protein localises to the cytoplasm. The catalysed reaction is RNA(n+1) + phosphate = RNA(n) + a ribonucleoside 5'-diphosphate. Involved in mRNA degradation. Catalyzes the phosphorolysis of single-stranded polyribonucleotides processively in the 3'- to 5'-direction. The protein is Polyribonucleotide nucleotidyltransferase of Alkalilimnicola ehrlichii (strain ATCC BAA-1101 / DSM 17681 / MLHE-1).